Consider the following 383-residue polypeptide: Probable disease resistance protein At4g19060 (383 aa).

A disordered region spans residues 36–84 (YEKWSSGKQRGSSSKHGNQSTHGDSSPTRNSSGSSKKGRPKANRVETSS). A compositionally biased stretch (polar residues) spans 41-70 (SGKQRGSSSKHGNQSTHGDSSPTRNSSGSS). NB-ARC domains follow at residues 75–184 (PKAN…MFKH) and 207–281 (VKEK…LAKA). 121–128 (GKYGVGKT) serves as a coordination point for ATP.

In terms of biological role, possible disease resistance protein. The chain is Probable disease resistance protein At4g19060 from Arabidopsis thaliana (Mouse-ear cress).